The chain runs to 145 residues: Immune protein Tsi3 (145 aa).

The first 15 residues, 1–15, serve as a signal peptide directing secretion; sequence MKTVALILASLALLA. Residue Cys16 is the site of N-palmitoyl cysteine attachment. Residue Cys16 is the site of S-diacylglycerol cysteine attachment. The tract at residues 53–85 is disordered; the sequence is FDEGGKLRNPRQLEVQRQDAPPPPDLASRRLGD. Residue Glu126 coordinates Ca(2+).

In terms of assembly, forms a heterotetramer with Tse3 consisting of two Tse3 dimers and two Tsi3 dimers. Formation of the complex inactivates Tse3 enzymatic activity.

In terms of biological role, immunity protein that plays a role in preventing early activation of toxin Tse3. Occupies Tse3 substrate binding site and prevents the substrate from entering. The chain is Immune protein Tsi3 from Pseudomonas aeruginosa (strain ATCC 15692 / DSM 22644 / CIP 104116 / JCM 14847 / LMG 12228 / 1C / PRS 101 / PAO1).